The primary structure comprises 432 residues: Glutamate-1-semialdehyde 2,1-aminomutase 1 (432 aa).

Lys-268 is modified (N6-(pyridoxal phosphate)lysine).

Belongs to the class-III pyridoxal-phosphate-dependent aminotransferase family. HemL subfamily. Homodimer. Pyridoxal 5'-phosphate is required as a cofactor.

It is found in the cytoplasm. It catalyses the reaction (S)-4-amino-5-oxopentanoate = 5-aminolevulinate. Its pathway is porphyrin-containing compound metabolism; protoporphyrin-IX biosynthesis; 5-aminolevulinate from L-glutamyl-tRNA(Glu): step 2/2. This chain is Glutamate-1-semialdehyde 2,1-aminomutase 1, found in Bacillus cereus (strain B4264).